We begin with the raw amino-acid sequence, 145 residues long: Large ribosomal subunit protein uL15 (145 aa).

The interval 1 to 57 (MKLNDLSPAPGSRREKHRPGRGIGSGLGKTGGRGHKGQTSRSGGTIAPGFEGGQQPL) is disordered. Residues 21–31 (RGIGSGLGKTG) are compositionally biased toward gly residues.

It belongs to the universal ribosomal protein uL15 family. Part of the 50S ribosomal subunit.

Binds to the 23S rRNA. The protein is Large ribosomal subunit protein uL15 of Pseudomonas fluorescens (strain Pf0-1).